Reading from the N-terminus, the 182-residue chain is MIKLTQEEQKYLLDSIRIIPDFPKKGIIFRDITTLLNNKEALNFLLKHLKERYKDYNLDFIAGTESRGFIFASMICAKLNLPFVPIRKPGKLPFETFSCEYDLEYGSDKVELHKDAFKNIQNARVLLVDDLIATGGTAIASYELIQKAGAKCVEACFLMNLKDLNGANKLEKLTSVYSVLEI.

The protein belongs to the purine/pyrimidine phosphoribosyltransferase family. In terms of assembly, homodimer.

It is found in the cytoplasm. The enzyme catalyses AMP + diphosphate = 5-phospho-alpha-D-ribose 1-diphosphate + adenine. The protein operates within purine metabolism; AMP biosynthesis via salvage pathway; AMP from adenine: step 1/1. Functionally, catalyzes a salvage reaction resulting in the formation of AMP, that is energically less costly than de novo synthesis. This is Adenine phosphoribosyltransferase from Campylobacter jejuni subsp. doylei (strain ATCC BAA-1458 / RM4099 / 269.97).